The following is a 248-amino-acid chain: Large ribosomal subunit protein uL4 (248 aa).

Residues 44 to 109 (QDTGTDEYAG…LDINTKERKL (66 aa)) are disordered. The span at 92 to 109 (PKAEKDRGLDINTKERKL) shows a compositional bias: basic and acidic residues.

Belongs to the universal ribosomal protein uL4 family. Part of the 50S ribosomal subunit.

One of the primary rRNA binding proteins, this protein initially binds near the 5'-end of the 23S rRNA. It is important during the early stages of 50S assembly. It makes multiple contacts with different domains of the 23S rRNA in the assembled 50S subunit and ribosome. Its function is as follows. Forms part of the polypeptide exit tunnel. This is Large ribosomal subunit protein uL4 from Natronomonas pharaonis (strain ATCC 35678 / DSM 2160 / CIP 103997 / JCM 8858 / NBRC 14720 / NCIMB 2260 / Gabara) (Halobacterium pharaonis).